Reading from the N-terminus, the 207-residue chain is Large ribosomal subunit protein bL25 (207 aa).

The disordered stretch occupies residues 1 to 20 (MANHQIKAQRRKDEGKGASR).

It belongs to the bacterial ribosomal protein bL25 family. CTC subfamily. Part of the 50S ribosomal subunit; part of the 5S rRNA/L5/L18/L25 subcomplex. Contacts the 5S rRNA. Binds to the 5S rRNA independently of L5 and L18.

This is one of the proteins that binds to the 5S RNA in the ribosome where it forms part of the central protuberance. The polypeptide is Large ribosomal subunit protein bL25 (Xylella fastidiosa (strain M12)).